The following is a 185-amino-acid chain: Elongation factor P (185 aa).

Belongs to the elongation factor P family.

Its subcellular location is the cytoplasm. The protein operates within protein biosynthesis; polypeptide chain elongation. In terms of biological role, involved in peptide bond synthesis. Stimulates efficient translation and peptide-bond synthesis on native or reconstituted 70S ribosomes in vitro. Probably functions indirectly by altering the affinity of the ribosome for aminoacyl-tRNA, thus increasing their reactivity as acceptors for peptidyl transferase. The chain is Elongation factor P from Rippkaea orientalis (strain PCC 8801 / RF-1) (Cyanothece sp. (strain PCC 8801)).